Here is a 375-residue protein sequence, read N- to C-terminus: Pectate lyase B (375 aa).

The first 22 residues, 1–22 (MKSLITPIAAGLLLAFSQYSLA), serve as a signal peptide directing secretion. Residues Cys-93 and Cys-176 are joined by a disulfide bond. Ca(2+)-binding residues include Asp-150, Asp-152, Glu-187, and Asp-191. Residue Arg-240 is part of the active site. Cys-351 and Cys-374 form a disulfide bridge.

This sequence belongs to the polysaccharide lyase 1 family. PLADES subfamily. Requires Ca(2+) as cofactor.

The protein resides in the secreted. It carries out the reaction Eliminative cleavage of (1-&gt;4)-alpha-D-galacturonan to give oligosaccharides with 4-deoxy-alpha-D-galact-4-enuronosyl groups at their non-reducing ends.. Its pathway is glycan metabolism; pectin degradation; 2-dehydro-3-deoxy-D-gluconate from pectin: step 2/5. Its function is as follows. Involved in maceration and soft-rotting of plant tissue. This Dickeya chrysanthemi (Pectobacterium chrysanthemi) protein is Pectate lyase B (pelB).